A 555-amino-acid polypeptide reads, in one-letter code: E3 ubiquitin-protein ligase ARIH1 (555 aa).

Residues 1-47 show a composition bias toward acidic residues; that stretch reads MDSDEGYNYEFDEDEECSEEDSGAEEEEDDDEDEPDDDNLDLGEVEL. The interval 1 to 93 is disordered; the sequence is MDSDEGYNYE…GGGGGPGHEQ (93 aa). The span at 65–90 shows a compositional bias: gly residues; it reads ETGGGGGSALGPGGGGGGGGGGGGPG. The tract at residues 103–151 is UBA-like; the sequence is TAEQILQHMVECIREVNEVIQNPATITRILLSHFNWDKEKLMERYFDGN. Position 140 is an N6-acetyllysine (Lys140). Residues 180–391 form a TRIAD supradomain region; that stretch reads QDMPCQICYL…SAWYNCNRYN (212 aa). The Zn(2+) site is built by Cys184, Cys187, Cys201, His203, Cys206, Cys209, Cys229, Cys234, Cys274, Cys279, Cys295, Cys297, Cys302, Cys305, His310, Cys315, Cys342, and Cys345. The segment at 184–234 adopts an RING-type 1 zinc-finger fold; sequence CQICYLNYPNSYFTGLECGHKFCMQCWSEYLTTKIMEEGMGQTISCPAHGC. The IBR-type zinc-finger motif lies at 254-315; the sequence is LKYQHLITNS…GENWHDPVKC (62 aa). The RING-type 2; atypical zinc finger occupies 342-373; sequence CPKCHVTIEKDGGCNHMVCRNQNCKAEFCWVC. Cys355 is an active-site residue. Cys360, Cys365, Cys370, Cys373, His380, and Cys387 together coordinate Zn(2+). The ariadne domain stretch occupies residues 406 to 555; it reads RAALQRYLFY…EKDLWEYIED (150 aa).

Belongs to the RBR family. Ariadne subfamily. As to quaternary structure, interacts (via the first RING-type zinc finger) with UBE2L3. Associates with cullin-RING ubiquitin ligase (CRL) complexes containing CUL1, CUL2 and CUL3. Interacts with neddylated CUL1. Interacts with neddylated CUL2. Interacts with neddylated CUL3. Interacts with neddylated CUL4A. As to expression, widely expressed.

It is found in the cytoplasm. The protein resides in the nucleus. Its subcellular location is the cajal body. The catalysed reaction is [E2 ubiquitin-conjugating enzyme]-S-ubiquitinyl-L-cysteine + [acceptor protein]-L-lysine = [E2 ubiquitin-conjugating enzyme]-L-cysteine + [acceptor protein]-N(6)-ubiquitinyl-L-lysine.. It functions in the pathway protein modification; protein ubiquitination. Its activity is regulated as follows. Autoinhibited by the ariadne domain, which masks the second RING-type zinc finger that contains the active site and inhibits the E3 activity. Inhibition is relieved upon binding to neddylated cullin-RING ubiquitin ligase complexes, which activate the E3 ligase activity of ARIH1. Its function is as follows. E3 ubiquitin-protein ligase, which catalyzes ubiquitination of target proteins together with ubiquitin-conjugating enzyme E2 UBE2L3. Acts as an atypical E3 ubiquitin-protein ligase by working together with cullin-RING ubiquitin ligase (CRL) complexes and initiating ubiquitination of CRL substrates: associates with CRL complexes and specifically mediates addition of the first ubiquitin on CRLs targets. The initial ubiquitin is then elongated by CDC34/UBE2R1 and UBE2R2. E3 ubiquitin-protein ligase activity is activated upon binding to neddylated cullin-RING ubiquitin ligase complexes. Plays a role in protein translation in response to DNA damage by mediating ubiquitination of EIF4E2, the consequences of EIF4E2 ubiquitination are however unclear. According to a report, EIF4E2 ubiquitination leads to promote EIF4E2 cap-binding and protein translation arrest. According to another report EIF4E2 ubiquitination leads to its subsequent degradation. Acts as the ligase involved in ISGylation of EIF4E2. In vitro, controls the degradation of the LINC (LInker of Nucleoskeleton and Cytoskeleton) complex member SUN2 and may therefore have a role in the formation and localization of the LINC complex, and as a consequence, may act in nuclear subcellular localization and nuclear morphology. The chain is E3 ubiquitin-protein ligase ARIH1 (Arih1) from Mus musculus (Mouse).